Here is a 487-residue protein sequence, read N- to C-terminus: Probable glycine dehydrogenase (decarboxylating) subunit 2 (487 aa).

K273 carries the N6-(pyridoxal phosphate)lysine modification.

The protein belongs to the GcvP family. C-terminal subunit subfamily. As to quaternary structure, the glycine cleavage system is composed of four proteins: P, T, L and H. In this organism, the P 'protein' is a heterodimer of two subunits. Pyridoxal 5'-phosphate serves as cofactor.

The catalysed reaction is N(6)-[(R)-lipoyl]-L-lysyl-[glycine-cleavage complex H protein] + glycine + H(+) = N(6)-[(R)-S(8)-aminomethyldihydrolipoyl]-L-lysyl-[glycine-cleavage complex H protein] + CO2. The glycine cleavage system catalyzes the degradation of glycine. The P protein binds the alpha-amino group of glycine through its pyridoxal phosphate cofactor; CO(2) is released and the remaining methylamine moiety is then transferred to the lipoamide cofactor of the H protein. This is Probable glycine dehydrogenase (decarboxylating) subunit 2 from Lysinibacillus sphaericus (strain C3-41).